The chain runs to 810 residues: Protein 4.1 (810 aa).

The disordered stretch occupies residues 1 to 124; sequence MTTEKSLVAE…KEIEFGTSLD (124 aa). A Phosphoserine modification is found at Ser-14. Thr-61 carries the post-translational modification Phosphothreonine. The span at 62–76 shows a compositional bias: basic and acidic residues; that stretch reads PTHEDLTKNKERTSE. 10 positions are modified to phosphoserine: Ser-85, Ser-86, Ser-96, Ser-105, Ser-122, Ser-150, Ser-152, Ser-153, Ser-189, and Ser-192. A compositionally biased stretch (basic and acidic residues) spans 102–118; sequence DVESAKEKCEGGQKEIE. A disordered region spans residues 152–203; that stretch reads SSAETQPAQEEHREDPDFETKEGGGLEECSKIEVKEESPESKAERELKASQK. Over residues 160 to 200 the composition is skewed to basic and acidic residues; that stretch reads QEEHREDPDFETKEGGGLEECSKIEVKEESPESKAERELKA. Positions 211–492 constitute an FERM domain; the sequence is MHCKVSLLDD…EHHTFFRLTS (282 aa). Phosphotyrosine is present on Tyr-223. Thr-379 bears the Phosphothreonine mark. Residues 518 to 613 form a disordered region; it reads TRQASALIDR…DQAEPEPTEV (96 aa). Ser-522, Ser-541, Ser-543, and Ser-555 each carry phosphoserine. Residues 587-601 show a composition bias toward basic and acidic residues; the sequence is AQKETVKDEEKKEEG. The tract at residues 615-659 is spectrin--actin-binding; it reads KDLDKSQEEIKKHHASISELKKNFMESVPEPRPSEWDKRLSTHSP. Phosphoserine is present on residues Ser-620, Ser-630, Ser-655, and Ser-658. Positions 660 to 810 are C-terminal (CTD); that stretch reads FRTLNINGQL…VHQETEISEE (151 aa). A phosphothreonine mark is found at Thr-682 and Thr-805.

In terms of assembly, binds with a high affinity to glycophorin and with lower affinity to band III protein. Associates with the nuclear mitotic apparatus. Binds calmodulin, CPAP and DLG1. Also found to associate with contractile apparatus and tight junctions. Interacts with NUMA1; this interaction is negatively regulated by CDK1 during metaphase and promotes for anaphase-specific localization of NUMA1 in symmetrically dividing cells. Interacts with ATP2B1; regulates small intestinal calcium absorption through regulation of membrane expression of ATP2B1. Post-translationally, O-glycosylated; contains N-acetylglucosamine side chains in the C-terminal domain. In terms of processing, phosphorylated at multiple sites by different protein kinases and each phosphorylation event selectively modulates the protein's functions.

Its subcellular location is the nucleus. The protein localises to the cytoplasm. It is found in the cytoskeleton. The protein resides in the cell cortex. Functionally, protein 4.1 is a major structural element of the erythrocyte membrane skeleton. It plays a key role in regulating membrane physical properties of mechanical stability and deformability by stabilizing spectrin-actin interaction. Recruits DLG1 to membranes. Required for dynein-dynactin complex and NUMA1 recruitment at the mitotic cell cortex during anaphase. The chain is Protein 4.1 from Canis lupus familiaris (Dog).